We begin with the raw amino-acid sequence, 137 residues long: ATP synthase epsilon chain, sodium ion specific (137 aa).

The protein belongs to the ATPase epsilon chain family. As to quaternary structure, F-type ATPases have 2 components, CF(1) - the catalytic core - and CF(0) - the membrane proton channel. CF(1) has five subunits: alpha(3), beta(3), gamma(1), delta(1), epsilon(1). CF(0) has three main subunits: a, b and c.

It is found in the cell inner membrane. In terms of biological role, produces ATP from ADP in the presence of a sodium gradient across the membrane. The polypeptide is ATP synthase epsilon chain, sodium ion specific (atpC) (Propionigenium modestum).